Here is a 1313-residue protein sequence, read N- to C-terminus: Kinesin-like protein KIN-12B (1313 aa).

Residues 1-74 (MKHFMMPRNA…PPRPPSSNPL (74 aa)) form a disordered region. Residues 17 to 26 (ESQSPNPSLT) show a composition bias toward polar residues. In terms of domain architecture, Kinesin motor spans 96–431 (GVKVIVRMKP…LRFAQRAKAI (336 aa)). 170–177 (GQTGSGKT) contributes to the ATP binding site. Microtubules-binding stretches follow at residues 298–302 (SSRSH), 331–337 (VDLAGSE), and 380–384 (HIPYR). Positions 429–467 (KAIQNKAIVNEVMQDDVNFLREVIRQLRDELQRVKDDKG) are neck. A disordered region spans residues 685-709 (ESASPKIRNSRKSLRTTSMSTASQK). Residues 699–708 (RTTSMSTASQ) show a composition bias toward polar residues. Coiled coils occupy residues 932 to 1003 (LDEE…YTDS), 1062 to 1130 (AEEL…RIRE), and 1167 to 1241 (EKEV…TEIS).

This sequence belongs to the TRAFAC class myosin-kinesin ATPase superfamily. Kinesin family. KIN-12 subfamily. Homodimer and heterodimer with KIN12A. Interacts with TIO.

The protein resides in the cytoplasm. The protein localises to the cytoskeleton. Its subcellular location is the phragmoplast. Plus-end directed kinesin-like motor enzyme that plays a critical role in the organization of phragmoplast microtubules during cytokinesis. Constitutes a signaling module in association with serine/threonine-protein kinase TIO that is required to support phragmoplast expansion and cell-plate growth in plant cells. The sequence is that of Kinesin-like protein KIN-12B from Arabidopsis thaliana (Mouse-ear cress).